Consider the following 70-residue polypeptide: Small ribosomal subunit protein bS21 (70 aa).

Residues 39 to 70 (EKPTTERKRKKAAAVSRTRKRLRSQMLPKKLY) form a disordered region. A compositionally biased stretch (basic residues) spans 45–61 (RKRKKAAAVSRTRKRLR).

This sequence belongs to the bacterial ribosomal protein bS21 family.

The sequence is that of Small ribosomal subunit protein bS21 from Ralstonia nicotianae (strain ATCC BAA-1114 / GMI1000) (Ralstonia solanacearum).